The chain runs to 442 residues: Glycoprotein endo-alpha-1,2-mannosidase-like protein (442 aa).

Residues 1-8 lie on the Cytoplasmic side of the membrane; sequence MNRLRRKA. A helical; Signal-anchor for type II membrane protein membrane pass occupies residues 9–29; the sequence is CVALLLFTLFIFGTMMGLRTL. The Lumenal portion of the chain corresponds to 30–442; the sequence is KPTDGFSDLA…FSKEKEQWLM (413 aa).

Belongs to the glycosyl hydrolase 99 family.

The protein resides in the golgi apparatus membrane. This is Glycoprotein endo-alpha-1,2-mannosidase-like protein (maneal) from Danio rerio (Zebrafish).